The chain runs to 56 residues: MSTYTVRGSFPARDGPQQFEKEVEAPNENVAEERVYSDFGSQHNLKRTQITIEEVA.

The tract at residues 1 to 24 (MSTYTVRGSFPARDGPQQFEKEVE) is disordered.

Belongs to the eukaryotic ribosomal protein eL20 family. In terms of assembly, part of the 50S ribosomal subunit. Binds 23S rRNA.

The sequence is that of Large ribosomal subunit protein eL20 from Haloarcula marismortui (strain ATCC 43049 / DSM 3752 / JCM 8966 / VKM B-1809) (Halobacterium marismortui).